The primary structure comprises 715 residues: Fatty acid oxidation complex subunit alpha (715 aa).

An enoyl-CoA hydratase/isomerase region spans residues 1–190 (MIYQGKAITV…KVGAVDAVVA (190 aa)). Residue Asp297 participates in substrate binding. A 3-hydroxyacyl-CoA dehydrogenase region spans residues 312-715 (KDVKLAAVLG…MAKNGQKFFG (404 aa)). NAD(+)-binding positions include Met325, Asp344, 401–403 (VVE), Lys408, and Ser430. His451 serves as the catalytic For 3-hydroxyacyl-CoA dehydrogenase activity. Asn454 contributes to the NAD(+) binding site. Substrate contacts are provided by Asn501 and Tyr660.

In the N-terminal section; belongs to the enoyl-CoA hydratase/isomerase family. It in the C-terminal section; belongs to the 3-hydroxyacyl-CoA dehydrogenase family. In terms of assembly, heterotetramer of two alpha chains (FadB) and two beta chains (FadA).

The enzyme catalyses a (3S)-3-hydroxyacyl-CoA + NAD(+) = a 3-oxoacyl-CoA + NADH + H(+). It catalyses the reaction a (3S)-3-hydroxyacyl-CoA = a (2E)-enoyl-CoA + H2O. It carries out the reaction a 4-saturated-(3S)-3-hydroxyacyl-CoA = a (3E)-enoyl-CoA + H2O. The catalysed reaction is (3S)-3-hydroxybutanoyl-CoA = (3R)-3-hydroxybutanoyl-CoA. The enzyme catalyses a (3Z)-enoyl-CoA = a 4-saturated (2E)-enoyl-CoA. It catalyses the reaction a (3E)-enoyl-CoA = a 4-saturated (2E)-enoyl-CoA. Its pathway is lipid metabolism; fatty acid beta-oxidation. In terms of biological role, involved in the aerobic and anaerobic degradation of long-chain fatty acids via beta-oxidation cycle. Catalyzes the formation of 3-oxoacyl-CoA from enoyl-CoA via L-3-hydroxyacyl-CoA. It can also use D-3-hydroxyacyl-CoA and cis-3-enoyl-CoA as substrate. This is Fatty acid oxidation complex subunit alpha from Pseudomonas paraeruginosa (strain DSM 24068 / PA7) (Pseudomonas aeruginosa (strain PA7)).